A 215-amino-acid chain; its full sequence is MLDIGWTELVVIAIVLIIVVGPKDLPPMLRAFGRMTSKMRGMASDFRRQFDEALREADLDDVRKTISDAQSLNPTAALRDAMNPLRQLGNEIKSDLQKATTPDRPPASATPEPLVEPVNTDAVGETAAKATEKVAAAAVSSASRQMDRAADVPKASEPKPAPKPRAQSKKPGTSVTKKAAGETAPKKSPARKAPGEAPAANKSKTRAASRKKGDA.

A helical transmembrane segment spans residues 1 to 21 (MLDIGWTELVVIAIVLIIVVG). Disordered regions lie at residues 95–119 (DLQK…EPVN) and 138–215 (AVSS…KGDA). Residues 145 to 157 (QMDRAADVPKASE) show a composition bias toward basic and acidic residues. The span at 203–215 (SKTRAASRKKGDA) shows a compositional bias: basic residues.

This sequence belongs to the TatB family. As to quaternary structure, the Tat system comprises two distinct complexes: a TatABC complex, containing multiple copies of TatA, TatB and TatC subunits, and a separate TatA complex, containing only TatA subunits. Substrates initially bind to the TatABC complex, which probably triggers association of the separate TatA complex to form the active translocon.

The protein localises to the cell inner membrane. In terms of biological role, part of the twin-arginine translocation (Tat) system that transports large folded proteins containing a characteristic twin-arginine motif in their signal peptide across membranes. Together with TatC, TatB is part of a receptor directly interacting with Tat signal peptides. TatB may form an oligomeric binding site that transiently accommodates folded Tat precursor proteins before their translocation. The polypeptide is Sec-independent protein translocase protein TatB (Rhizobium meliloti (strain 1021) (Ensifer meliloti)).